The following is a 784-amino-acid chain: Toll-like receptor 2 (784 aa).

Residues 1 to 20 (MPHTLWMVWVLGVIISLSKE) form the signal peptide. Over 21-587 (ESSNQASLSC…VRLSVSECHR (567 aa)) the chain is Extracellular. C30 and C36 are oxidised to a cystine. LRR repeat units lie at residues 54–77 (VKCLDLSNNRITYISNSDLQRYVN), 78–101 (LQALVLTSNGINTIEEDSFSSLGR), 102–125 (LEHLDLSYNYLSNLSSSWFKPLSS), 126–150 (LKFLNLLGNPYKTLGETSLFSHLTK), 151–175 (LRILRVGNMDTFTKIQRKDFAGLTF), 176–199 (LEELEIDASDLQSYEPKSLKSIQN), 200–223 (VSHLILHMKQHILLLEIFVDLTSS), 224–250 (VECLELRDTDLNTFHFSELSTGETNSL), 251–278 (IKKFTFRNVKITDESLFQVMKLLSQISG), 279–308 (LLELEFDDCTLNGVGDFRGSDNDRVIDPGK), 309–337 (VETLTIRRLHIPQFYSFNDLSTLYPLTER), 338–361 (VKRITVENSKVFLVPCLLSRHLKS), 362–388 (LEYLDLSENLMVEEYLKNSACEDAWPS), 389–414 (LQTLILRQNHLASLGKIGETLLTLKN), 415–437 (LTNLDISKNTFHYMPETCQWPEK), 438–457 (MKYLNLSSTRIHSVTGCIPK), 458–478 (TLEILDISNNNLNLFSLNLPQ), 479–500 (LKELYISRNKLMTLPDASLLPM), and 501–524 (LLVLKISRNTITTFSKEQLDSFHT). N114 carries an N-linked (GlcNAc...) asparagine glycan. Residue N199 is glycosylated (N-linked (GlcNAc...) asparagine). Cysteines 353 and 382 form a disulfide. Residue N414 is glycosylated (N-linked (GlcNAc...) asparagine). C432 and C454 are joined by a disulfide. N-linked (GlcNAc...) asparagine glycosylation is present at N442. Residues 525 to 579 (LKTLEAGGNNFICSCEFLSFTQEQQALAKVLVDWPANYLCDSPSHVRGQRVQDVR) form the LRRCT domain. Residues 588–608 (AALVSGMCCALFLLILLMGVL) traverse the membrane as a helical segment. Over 609–784 (CHRFHGLWYM…WVNLRAAIKS (176 aa)) the chain is Cytoplasmic. One can recognise a TIR domain in the interval 639–782 (ICYDAFVSYS…GFWVNLRAAI (144 aa)). K754 is covalently cross-linked (Glycyl lysine isopeptide (Lys-Gly) (interchain with G-Cter in ubiquitin)). An ATG16L1-binding motif motif is present at residues 761–778 (YLEWPMDEARQEGFWVNL).

This sequence belongs to the Toll-like receptor family. Interacts with LY96, TLR1 and TLR6 (via extracellular domain). TLR2 seems to exist in heterodimers with either TLR1 or TLR6 before stimulation by the ligand. The heterodimers form bigger oligomers in response to their corresponding ligands as well as further heterotypic associations with other receptors such as CD14 and/or CD36. Binds MYD88 (via TIR domain). Interacts with TICAM1. Interacts with CNPY3. Interacts with ATG16L1. Interacts with PPP1R11. Interacts with TICAM2. Interacts with TIRAP. In terms of processing, ubiquitinated at Lys-754 by PPP1R11, leading to its degradation. Deubiquitinated by USP2. Glycosylation of Asn-442 is critical for secretion of the N-terminal ectodomain of TLR2.

Its subcellular location is the membrane. The protein resides in the cytoplasmic vesicle. It localises to the phagosome membrane. The protein localises to the membrane raft. Functionally, cooperates with LY96 to mediate the innate immune response to bacterial lipoproteins and other microbial cell wall components. Cooperates with TLR1 or TLR6 to mediate the innate immune response to bacterial lipoproteins or lipopeptides. Acts via MYD88 and TRAF6, leading to NF-kappa-B activation, cytokine secretion and the inflammatory response. May also promote apoptosis in response to lipoproteins. Forms activation clusters composed of several receptors depending on the ligand, these clusters trigger signaling from the cell surface and subsequently are targeted to the Golgi in a lipid-raft dependent pathway. Forms the cluster TLR2:TLR6:CD14:CD36 in response to diacylated lipopeptides and TLR2:TLR1:CD14 in response to triacylated lipopeptides. This chain is Toll-like receptor 2 (TLR2), found in Macaca mulatta (Rhesus macaque).